Reading from the N-terminus, the 89-residue chain is Small ribosomal subunit protein uS15 (89 aa).

This sequence belongs to the universal ribosomal protein uS15 family. As to quaternary structure, part of the 30S ribosomal subunit. Forms a bridge to the 50S subunit in the 70S ribosome, contacting the 23S rRNA.

Its function is as follows. One of the primary rRNA binding proteins, it binds directly to 16S rRNA where it helps nucleate assembly of the platform of the 30S subunit by binding and bridging several RNA helices of the 16S rRNA. Forms an intersubunit bridge (bridge B4) with the 23S rRNA of the 50S subunit in the ribosome. This is Small ribosomal subunit protein uS15 from Porphyromonas gingivalis (strain ATCC 33277 / DSM 20709 / CIP 103683 / JCM 12257 / NCTC 11834 / 2561).